Here is a 310-residue protein sequence, read N- to C-terminus: Porphobilinogen deaminase (310 aa).

At Cys241 the chain carries S-(dipyrrolylmethanemethyl)cysteine.

It belongs to the HMBS family. Monomer. Requires dipyrromethane as cofactor.

It catalyses the reaction 4 porphobilinogen + H2O = hydroxymethylbilane + 4 NH4(+). It participates in porphyrin-containing compound metabolism; protoporphyrin-IX biosynthesis; coproporphyrinogen-III from 5-aminolevulinate: step 2/4. In terms of biological role, tetrapolymerization of the monopyrrole PBG into the hydroxymethylbilane pre-uroporphyrinogen in several discrete steps. This Pelobacter propionicus (strain DSM 2379 / NBRC 103807 / OttBd1) protein is Porphobilinogen deaminase.